Reading from the N-terminus, the 473-residue chain is Bestrophin-4 (473 aa).

Over 1-31 (MTVSYTLKVAEARFGGFSGLLLRWRGSIYKL) the chain is Cytoplasmic. A10 is a Ca(2+) binding site. Residues 32–51 (LYKEFLLFGALYAVLSITYR) traverse the membrane as a helical segment. Residues 52–60 (LLLTQEQRY) are Extracellular-facing. A helical membrane pass occupies residues 61–82 (VYAQVARYCNRSADLIPLSFVL). Residues 83 to 237 (GFYVTLVVNR…DWISIPLVYT (155 aa)) are Cytoplasmic-facing. A helical transmembrane segment spans residues 238–255 (QVVTIAVYSFFALSLVGR). The Extracellular portion of the chain corresponds to 256 to 289 (QFVEPEAGAAKPQKLLKPGQEPAPALGDPDMYVP). A helical transmembrane segment spans residues 290–303 (LTTLLQFFFYAGWL). At 304–473 (KVAEQIINPF…AESGDEALEP (170 aa)) the chain is on the cytoplasmic side. Q308, N311, D316, and D319 together coordinate Ca(2+). Disordered regions lie at residues 379–408 (TFNL…PAAQ) and 428–473 (RNFG…ALEP). Positions 396-407 (ASPGSGRPAPAA) are enriched in low complexity. Positions 445–461 (FRAEEGGDPEAAARIEE) are enriched in basic and acidic residues. A compositionally biased stretch (acidic residues) spans 462 to 473 (ESAESGDEALEP).

This sequence belongs to the anion channel-forming bestrophin (TC 1.A.46) family. Calcium-sensitive chloride channel subfamily. In terms of tissue distribution, predominantly found in colon and the weakly in fetal brain, spinal cord, retina, lung, trachea, testis and placenta.

The protein resides in the cell membrane. It carries out the reaction chloride(in) = chloride(out). The catalysed reaction is hydrogencarbonate(in) = hydrogencarbonate(out). Ligand-gated anion channel that allows the movement of anions across cell membranes when activated by Calcium (Ca2+). Mediates the movement of hydrogencarbonate and chloride. The sequence is that of Bestrophin-4 from Homo sapiens (Human).